Reading from the N-terminus, the 180-residue chain is Large ribosomal subunit protein uL5 (180 aa).

Belongs to the universal ribosomal protein uL5 family. In terms of assembly, part of the 50S ribosomal subunit; part of the 5S rRNA/L5/L18/L25 subcomplex. Contacts the 5S rRNA and the P site tRNA. Forms a bridge to the 30S subunit in the 70S ribosome.

In terms of biological role, this is one of the proteins that bind and probably mediate the attachment of the 5S RNA into the large ribosomal subunit, where it forms part of the central protuberance. In the 70S ribosome it contacts protein S13 of the 30S subunit (bridge B1b), connecting the 2 subunits; this bridge is implicated in subunit movement. Contacts the P site tRNA; the 5S rRNA and some of its associated proteins might help stabilize positioning of ribosome-bound tRNAs. The protein is Large ribosomal subunit protein uL5 of Anaeromyxobacter dehalogenans (strain 2CP-1 / ATCC BAA-258).